The chain runs to 379 residues: Cytochrome b (379 aa).

4 consecutive transmembrane segments (helical) span residues 33-53, 77-98, 113-133, and 178-198; these read FGSL…FLAM, WLIR…FIHV, WNIG…GYVL, and FFAF…VHLL. Heme b is bound by residues H83 and H97. Residues H182 and H196 each coordinate heme b. Position 201 (H201) interacts with a ubiquinone. The next 4 membrane-spanning stretches (helical) occupy residues 226–246, 288–308, 320–340, and 347–367; these read TKDL…ALFF, LGGV…PLLN, ITQV…WIGG, and XTMI…ILIP.

This sequence belongs to the cytochrome b family. In terms of assembly, the cytochrome bc1 complex contains 11 subunits: 3 respiratory subunits (MT-CYB, CYC1 and UQCRFS1), 2 core proteins (UQCRC1 and UQCRC2) and 6 low-molecular weight proteins (UQCRH/QCR6, UQCRB/QCR7, UQCRQ/QCR8, UQCR10/QCR9, UQCR11/QCR10 and a cleavage product of UQCRFS1). This cytochrome bc1 complex then forms a dimer. The cofactor is heme b.

The protein localises to the mitochondrion inner membrane. Component of the ubiquinol-cytochrome c reductase complex (complex III or cytochrome b-c1 complex) that is part of the mitochondrial respiratory chain. The b-c1 complex mediates electron transfer from ubiquinol to cytochrome c. Contributes to the generation of a proton gradient across the mitochondrial membrane that is then used for ATP synthesis. In Akodon boliviensis (Bolivian grass mouse), this protein is Cytochrome b (MT-CYB).